A 198-amino-acid polypeptide reads, in one-letter code: Protein hunchback (198 aa).

2 disordered regions span residues 16 to 117 and 152 to 198; these read SHHH…PMQS and NDKL…KYMA. A compositionally biased stretch (basic residues) spans 17-31; the sequence is HHHHHHHAHHSHHQH. 2 stretches are compositionally biased toward low complexity: residues 35-46 and 68-83; these read SNSNSNASSPHQ and QQQQ…QQQQ. Polar residues predominate over residues 95–105; sequence PSPSNNDQNSP. A compositionally biased stretch (basic and acidic residues) spans 179 to 198; it reads EPEKEHDLMSNSSEDMKYMA.

Belongs to the hunchback C2H2-type zinc-finger protein family.

Its subcellular location is the nucleus. Gap class segmentation protein that controls development of head structures. The sequence is that of Protein hunchback (hb) from Drosophila disjuncta (Fruit fly).